A 167-amino-acid chain; its full sequence is Phospholipase A2 (167 aa).

Ca(2+)-binding residues include Trp38, Gly40, and Gly42. Cystine bridges form between Cys39–Cys61, Cys60–Cys99, Cys67–Cys92, Cys90–Cys127, and Cys132–Cys144. Asn47 is a glycosylation site (N-linked (GlcNAc...) asparagine). His64 is a catalytic residue. Asp65 is a binding site for Ca(2+). Residues 136-140 constitute a propeptide that is removed on maturation; it reads ARSAR.

The protein belongs to the phospholipase A2 family. Group III subfamily. As to quaternary structure, heterodimer composed of a large subunit and a small subunit; disulfide-linked. Requires Ca(2+) as cofactor. Expressed by the venom gland.

The protein localises to the secreted. The catalysed reaction is a 1,2-diacyl-sn-glycero-3-phosphocholine + H2O = a 1-acyl-sn-glycero-3-phosphocholine + a fatty acid + H(+). Its function is as follows. Phospholipase toxin, which catalyzes the calcium-dependent hydrolysis of the 2-acyl groups in 3-sn-phosphoglycerides. Inhibits both skeletal (RYR1) and cardiac (RYR2) ryanodine receptors (calcium release channels). Probably blocks ryanodine receptors by generating a lipid product. Shows hemolytic activity, but it is not know if it is direct or indirect. In Hottentotta tamulus (Eastern Indian scorpion), this protein is Phospholipase A2.